Consider the following 85-residue polypeptide: ATP synthase subunit c (85 aa).

Transmembrane regions (helical) follow at residues Ile10 to Leu30 and Phe53 to Phe73.

It belongs to the ATPase C chain family. F-type ATPases have 2 components, F(1) - the catalytic core - and F(0) - the membrane proton channel. F(1) has five subunits: alpha(3), beta(3), gamma(1), delta(1), epsilon(1). F(0) has three main subunits: a(1), b(2) and c(10-14). The alpha and beta chains form an alternating ring which encloses part of the gamma chain. F(1) is attached to F(0) by a central stalk formed by the gamma and epsilon chains, while a peripheral stalk is formed by the delta and b chains.

It is found in the cell inner membrane. In terms of biological role, f(1)F(0) ATP synthase produces ATP from ADP in the presence of a proton or sodium gradient. F-type ATPases consist of two structural domains, F(1) containing the extramembraneous catalytic core and F(0) containing the membrane proton channel, linked together by a central stalk and a peripheral stalk. During catalysis, ATP synthesis in the catalytic domain of F(1) is coupled via a rotary mechanism of the central stalk subunits to proton translocation. Its function is as follows. Key component of the F(0) channel; it plays a direct role in translocation across the membrane. A homomeric c-ring of between 10-14 subunits forms the central stalk rotor element with the F(1) delta and epsilon subunits. The polypeptide is ATP synthase subunit c (Shewanella halifaxensis (strain HAW-EB4)).